A 944-amino-acid polypeptide reads, in one-letter code: 2-oxoglutarate dehydrogenase E1 component (944 aa).

A disordered region spans residues R914–N944. Residues P925–V936 are compositionally biased toward basic and acidic residues.

It belongs to the alpha-ketoglutarate dehydrogenase family. In terms of assembly, homodimer. Part of the 2-oxoglutarate dehydrogenase (OGDH) complex composed of E1 (2-oxoglutarate dehydrogenase), E2 (dihydrolipoamide succinyltransferase) and E3 (dihydrolipoamide dehydrogenase); the complex contains multiple copies of the three enzymatic components (E1, E2 and E3). The cofactor is thiamine diphosphate.

The enzyme catalyses N(6)-[(R)-lipoyl]-L-lysyl-[protein] + 2-oxoglutarate + H(+) = N(6)-[(R)-S(8)-succinyldihydrolipoyl]-L-lysyl-[protein] + CO2. In terms of biological role, E1 component of the 2-oxoglutarate dehydrogenase (OGDH) complex which catalyzes the decarboxylation of 2-oxoglutarate, the first step in the conversion of 2-oxoglutarate to succinyl-CoA and CO(2). This Bacillus licheniformis (strain ATCC 14580 / DSM 13 / JCM 2505 / CCUG 7422 / NBRC 12200 / NCIMB 9375 / NCTC 10341 / NRRL NRS-1264 / Gibson 46) protein is 2-oxoglutarate dehydrogenase E1 component.